The sequence spans 327 residues: Protein-L-isoaspartate O-methyltransferase (327 aa).

Disordered stretches follow at residues 1 to 38 (MSGE…DAAR) and 62 to 105 (PRAA…KSAT). Residues 14-29 (EDLKREPRKPEGRAAE) are compositionally biased toward basic and acidic residues. A compositionally biased stretch (low complexity) spans 62 to 77 (PRAAGASGSGVPVAKP). A compositionally biased stretch (polar residues) spans 92 to 105 (APSSGVKNGDKSAT). Residue Ser-175 is part of the active site.

The protein belongs to the methyltransferase superfamily. L-isoaspartyl/D-aspartyl protein methyltransferase family.

The protein localises to the cytoplasm. It catalyses the reaction [protein]-L-isoaspartate + S-adenosyl-L-methionine = [protein]-L-isoaspartate alpha-methyl ester + S-adenosyl-L-homocysteine. Catalyzes the methyl esterification of L-isoaspartyl residues in peptides and proteins that result from spontaneous decomposition of normal L-aspartyl and L-asparaginyl residues. It plays a role in the repair and/or degradation of damaged proteins. This is Protein-L-isoaspartate O-methyltransferase from Burkholderia thailandensis (strain ATCC 700388 / DSM 13276 / CCUG 48851 / CIP 106301 / E264).